Here is a 937-residue protein sequence, read N- to C-terminus: MNKSHLGTADNPQEVVTAHDIGRLVDVVNVGKGFLRYVGPIHGKDGMFCGIELLEPNGKHDGTFQGVSYFIATPYHGIFAPIFRVTLDAEELPKPPPPNPSNRLSRSALPALQLRNPLTQERKPEEDVMSTSVYVSSSTKPIAIPTKQCRPPETDPMQMSMFSDMMDGSMFSNGSWSDIADSMITSNCTFTVRKGLPIDDDGDLMSVPMVQSVFNIDREALRREEQLQSSIVLGESRIGVEHLPIIEDENELETPLVETRTMPLPNDLNANFSNKNSTTTFVEPETPKVEIRENGNLDNSIETPPQQSPSGSSMVSHESDSSSKKDDTKSDKSPTKKSQKMEEKPVVKKKEEPAAPPPPPKFPVKQKAPSKHQLMMEQLKASIEAEKTKPKKEIKSRVSLLPPPAPKAPQKENKEGGEMTETPRRTITKTPLKTVNAKAKTSPTPPVERQKKERKPLYVAPPAKERVEKEKKIPSKPVVSPPTTAEKKPVVSSIPSTSSASKGPFPTSSFAGGKLQGPRKTSSSSTTTSAKKQKNPPIDEKEKLSRLQHSTHAFEATLIVMNRINEDNERKLGNISEQYEKKVSELGDLKKMLDEARKKFEEDVEQMKNSNQQVIRNHANAVESLQKTHETQIAEKNKEFERNFEEERARREAEVCAMNNRHQKVVACLDEKISEAEKQCEQLNVDKKVLQAALANDCDHRNQMLTKEISSLQTALEMKSAEMKELRQKNQNLSLQVDEIPLKELEISKWKHKSNEYKQMLDQKINGEKILVQQIEDLRRKQIHDEEEKEAMKRSFDLMQFKYENGDDPNVTSVMSAPMESRFSTPTKVQFRSRSSASGSRPISMATSNGGDQRLSTSSHHDDSMNRSTISMYTSHIRLPENHADDVIYAPDEIISSRSGSISQRLAISIENDGEPTIKSESSRIGNTSDSGIGLVM.

One can recognise a CAP-Gly domain in the interval 39-81 (GPIHGKDGMFCGIELLEPNGKHDGTFQGVSYFIATPYHGIFAP). 2 disordered regions span residues 90–131 (EELP…VMST) and 264–548 (LPND…SRLQ). Residues 268 to 281 (LNANFSNKNSTTTF) are compositionally biased toward polar residues. Residues 285-295 (ETPKVEIRENG) are compositionally biased toward basic and acidic residues. Positions 296-309 (NLDNSIETPPQQSP) are enriched in polar residues. 4 stretches are compositionally biased toward basic and acidic residues: residues 317-353 (HESD…KEEP), 383-396 (IEAE…EIKS), 409-424 (PQKE…ETPR), and 463-473 (AKERVEKEKKI). Positions 492–501 (SSIPSTSSAS) are enriched in low complexity. Coiled-coil stretches lie at residues 566–740 (EDNE…VDEI) and 773–800 (QQIE…DLMQ). Disordered stretches follow at residues 819 to 866 (MESR…DSMN) and 916 to 937 (PTIK…GLVM). Residues 832 to 844 (RSRSSASGSRPIS) show a composition bias toward low complexity. Residues 845 to 858 (MATSNGGDQRLSTS) are compositionally biased toward polar residues.

The polypeptide is CAP-Gly domain-containing linker protein 1 homolog (Caenorhabditis elegans).